The sequence spans 580 residues: Phosphomethylpyrimidine synthase (580 aa).

The segment at 1–58 (MTPTQNEIHPKHSYSPIRKHGLEVPETEIALDDSPSGPNEPFRIYRTRGPETDPTLGL) is disordered. Residues N180, M209, Y238, H274, 294–296 (SRG), 335–338 (DGLR), and E374 contribute to the substrate site. H378 contacts Zn(2+). Residue Y401 coordinates substrate. H442 is a binding site for Zn(2+). The [4Fe-4S] cluster site is built by C522, C525, and C530. The disordered stretch occupies residues 554–580 (VGASDSTEGMKEKSREFVAGGGEVYRE).

It belongs to the ThiC family. [4Fe-4S] cluster is required as a cofactor.

It catalyses the reaction 5-amino-1-(5-phospho-beta-D-ribosyl)imidazole + S-adenosyl-L-methionine = 4-amino-2-methyl-5-(phosphooxymethyl)pyrimidine + CO + 5'-deoxyadenosine + formate + L-methionine + 3 H(+). The protein operates within cofactor biosynthesis; thiamine diphosphate biosynthesis. Functionally, catalyzes the synthesis of the hydroxymethylpyrimidine phosphate (HMP-P) moiety of thiamine from aminoimidazole ribotide (AIR) in a radical S-adenosyl-L-methionine (SAM)-dependent reaction. The polypeptide is Phosphomethylpyrimidine synthase (Corynebacterium efficiens (strain DSM 44549 / YS-314 / AJ 12310 / JCM 11189 / NBRC 100395)).